A 516-amino-acid polypeptide reads, in one-letter code: Cytochrome P450 6d1 (516 aa).

Residue C461 coordinates heme.

Belongs to the cytochrome P450 family. Requires heme as cofactor.

It is found in the endoplasmic reticulum membrane. Its subcellular location is the microsome membrane. Metabolizes pyrethroid insecticides and other xenobiotics. This chain is Cytochrome P450 6d1 (CYP6D1), found in Musca domestica (House fly).